The primary structure comprises 631 residues: Coiled-coil domain-containing protein 93 (631 aa).

Disordered regions lie at residues 1–23 (MGLPRGPEGQGLPEVETREDEEQ) and 214–243 (QSKMEKAEDKKTALPAGLSATEKADAHEED). Positions 1-430 (MGLPRGPEGQ…LKAERAPRGD (430 aa)) are sufficient for interaction with CCDC22. The segment covering 215 to 225 (SKMEKAEDKKT) has biased composition (basic and acidic residues). Phosphoserine occurs at positions 298, 301, and 305. Positions 309-631 (LGTSQLHRRK…LLSKVKAKAS (323 aa)) form a coiled coil. The span at 421–433 (LKAERAPRGDEKT) shows a compositional bias: basic and acidic residues. Residues 421–447 (LKAERAPRGDEKTLSSGEPPGTLTSAM) form a disordered region. Positions 448–631 (THDEDLDRRY…LLSKVKAKAS (184 aa)) are sufficient for interaction with WASHC2C.

Belongs to the CCDC93 family. As to quaternary structure, component of the commander complex consisting of the CCC subcomplex and the retriever subcomplex. Component of the CCC (COMMD/CCDC22/CCDC93) subcomplex consisting of COMMD1, COMMD2, COMMD3, COMMD4, COMMD5, COMMD6, COMMD7, COMMD8, COMMD9, COMMD10, CCDC22 and CCDC93. Forms a coiled-coil heterodimer with CCDC22; this heterodimer interacts with the guanine nucleotide exchange factor DENND10; the interaction is direct. Interacts with WASHC1. Interacts directly with WASHC2C. Interacts with SNX17 and SNX31.

Its subcellular location is the early endosome. In terms of biological role, component of the commander complex that is essential for endosomal recycling of transmembrane cargos; the commander complex is composed of composed of the CCC subcomplex and the retriever subcomplex. Component of the CCC complex, which is involved in the regulation of endosomal recycling of surface proteins, including integrins, signaling receptor and channels. The CCC complex associates with SNX17, retriever and WASH complexes to prevent lysosomal degradation and promote cell surface recycling of numerous cargos such as integrins ITGA5:ITGB1. Involved in copper-dependent ATP7A trafficking between the trans-Golgi network and vesicles in the cell periphery; the function is proposed to depend on its association within the CCC complex and cooperation with the WASH complex on early endosomes and is dependent on its interaction with WASHC2C. Functionally, (Microbial infection) The CCC complex, in collaboration with the heterotrimeric retriever complex, mediates the exit of human papillomavirus to the cell surface. In Homo sapiens (Human), this protein is Coiled-coil domain-containing protein 93 (CCDC93).